Reading from the N-terminus, the 392-residue chain is DNA polymerase IV (392 aa).

A UmuC domain is found at 6–186 (IVHLDADAFF…LPIGKLPGVG (181 aa)). The Mg(2+) site is built by aspartate 10 and aspartate 103. Glutamate 104 is an active-site residue.

The protein belongs to the DNA polymerase type-Y family. Monomer. It depends on Mg(2+) as a cofactor.

The protein localises to the cytoplasm. It carries out the reaction DNA(n) + a 2'-deoxyribonucleoside 5'-triphosphate = DNA(n+1) + diphosphate. In terms of biological role, poorly processive, error-prone DNA polymerase involved in untargeted mutagenesis. Copies undamaged DNA at stalled replication forks, which arise in vivo from mismatched or misaligned primer ends. These misaligned primers can be extended by PolIV. Exhibits no 3'-5' exonuclease (proofreading) activity. May be involved in translesional synthesis, in conjunction with the beta clamp from PolIII. This Opitutus terrae (strain DSM 11246 / JCM 15787 / PB90-1) protein is DNA polymerase IV.